We begin with the raw amino-acid sequence, 585 residues long: Aspartate--tRNA ligase (585 aa).

An L-aspartate-binding site is contributed by Glu-173. The tract at residues 197–200 (QTLK) is aspartate. An L-aspartate-binding site is contributed by Arg-219. ATP is bound by residues 219–221 (RDE) and Gln-228. His-446 lines the L-aspartate pocket. Residue Glu-480 participates in ATP binding. Residue Arg-487 participates in L-aspartate binding. 532 to 535 (GLDR) serves as a coordination point for ATP.

Belongs to the class-II aminoacyl-tRNA synthetase family. Type 1 subfamily. Homodimer.

It is found in the cytoplasm. It carries out the reaction tRNA(Asp) + L-aspartate + ATP = L-aspartyl-tRNA(Asp) + AMP + diphosphate. In terms of biological role, catalyzes the attachment of L-aspartate to tRNA(Asp) in a two-step reaction: L-aspartate is first activated by ATP to form Asp-AMP and then transferred to the acceptor end of tRNA(Asp). The protein is Aspartate--tRNA ligase of Bacteroides fragilis (strain ATCC 25285 / DSM 2151 / CCUG 4856 / JCM 11019 / LMG 10263 / NCTC 9343 / Onslow / VPI 2553 / EN-2).